The following is a 154-amino-acid chain: MCQSNQIVSHFLSHRNVTNELAEKISKDHYSYKPAETSMSAEELVKHILTSFHLFANVIKEGNASPFQNKQEETETDLNVLAKTYTEKTVAILEQLTEEQLDREIDLTSAFGRKVTGRALLQLAMEHEIHHKGNLFVYVREMGHTELPFYQQRM.

His47, His127, and His131 together coordinate a divalent metal cation. At Tyr150 the chain carries Phosphotyrosine.

This sequence belongs to the DinB family. As to quaternary structure, homodimer.

This is an uncharacterized protein from Bacillus subtilis (strain 168).